Reading from the N-terminus, the 103-residue chain is Large ribosomal subunit protein bL21 (103 aa).

Belongs to the bacterial ribosomal protein bL21 family. As to quaternary structure, part of the 50S ribosomal subunit. Contacts protein L20.

In terms of biological role, this protein binds to 23S rRNA in the presence of protein L20. This is Large ribosomal subunit protein bL21 from Lactobacillus johnsonii (strain CNCM I-12250 / La1 / NCC 533).